A 554-amino-acid polypeptide reads, in one-letter code: Intraflagellar transport protein 56 (554 aa).

Positions 1–24 (MMLSRAKPAVGRGVQHTDKRKKKG) are disordered. TPR repeat units lie at residues 57–90 (EDTN…ENCN), 92–125 (EVWV…LQNR), 151–184 (TEDQ…NREY), and 468–501 (ANDC…EGKR).

This sequence belongs to the IFT56 family. Component of the IFT complex B. Interacts with IFT46; the interaction is direct.

It localises to the cell projection. Its subcellular location is the cilium. In terms of biological role, component of the intraflagellar transport (IFT) complex B required for transport of proteins in the motile cilium. Required for transport of specific ciliary cargo proteins related to motility, while it is neither required for IFT complex B assembly or motion nor for cilium assembly. Required for efficient coupling between the accumulation of GLI2 and GLI3 at the ciliary tips and their dissociation from the negative regulator SUFU. Plays a key role in maintaining the integrity of the IFT complex B and the proper ciliary localization of the IFT complex B components. Not required for IFT complex A ciliary localization or function. Essential for maintaining proper microtubule organization within the ciliary axoneme. In Homo sapiens (Human), this protein is Intraflagellar transport protein 56.